Consider the following 400-residue polypeptide: METHISCLFPELLAMIFGYLDVRDKGRAAQVCTAWRDAAYHKSVWRGVEAKLHLRRANPSLFPSLQARGIRRVQILSLRRSLSYVIQGMANIESLNLSGCYNLTDNGLGHAFVQEIGSLRALNLSLCKQITDSSLGRIAQYLKGLEVLELGGCSNITNTGLLLIAWGLQRLKSLNLRSCRHLSDVGIGHLAGMTRSAAEGCLGLEQLTLQDCQKLTDLSLKHISRGLTGLRLLNLSFCGGISDAGLLHLSHMGSLRSLNLRSCDNISDTGIMHLAMGSLRLSGLDVSFCDKVGDQSLAYIAQGLDGLKSLSLCSCHISDDGINRMVRQMHGLRTLNIGQCVRITDKGLELIAEHLSQLTGIDLYGCTRITKRGLERITQLPCLKVLNLGLWQMTDSEKVR.

Positions 2-48 constitute an F-box domain; that stretch reads ETHISCLFPELLAMIFGYLDVRDKGRAAQVCTAWRDAAYHKSVWRGV. The interval 2 to 48 is required for down-regulation of SNAI1; sequence ETHISCLFPELLAMIFGYLDVRDKGRAAQVCTAWRDAAYHKSVWRGV. 5 LRR repeats span residues 144-163, 170-191, 203-225, 229-250, and 254-275; these read GLEVLELGGCSNITNTGLLL, RLKSLNLRSCRHLSDVGIGHLA, GLEQLTLQDCQKLTDLSLKHISR, GLRLLNLSFCGGISDAGLLHLS, and SLRSLNLRSCDNISDTGIMHLA.

Part of a SCF (SKP1-cullin-F-box) ubiquitin-protein ligase complex. Interacts with SKP1 and CUL1. Interacts with SNAI1; the interaction requires the phosphorylation of the two serine residues in the substrate destruction motif D-S-G-X(2,3,4)-S.

The protein resides in the cytoplasm. Functionally, substrate-recognition component of some SCF (SKP1-CUL1-F-box protein)-type E3 ubiquitin-protein ligase complexes. The SCF(FBXL14) complex acts by mediating ubiquitination and subsequent degradation of SNAI1. This chain is F-box/LRR-repeat protein 14 (FBXL14), found in Bos taurus (Bovine).